A 228-amino-acid chain; its full sequence is MIKGILFDLDDTLYNSSEFVEIARREAVKSMIDAGLNIDFEEAMNILNKIIKDKGSNYGKHFDDLVKAVLGKYDPKIITTGIITYHNVKVALLRPYPHTIKTLMELKAMGLKLGVITDGLTIKQWEKLIRLGIHPFFDDVITSEEFGLGKPHLEFFKYGLKRMGLKAEETVYVGDRVDKDIKPAKELGMITVRILKGKYKDMEDDEYSDYTINSLQELVDIVKNLKKD.

It belongs to the HAD-like hydrolase superfamily. Requires Mg(2+) as cofactor.

Catalyzes the dephosphorylation of D,L-glyceraldehyde 3-phosphate in vitro. The polypeptide is Glyceraldehyde 3-phosphate phosphatase (Methanocaldococcus jannaschii (strain ATCC 43067 / DSM 2661 / JAL-1 / JCM 10045 / NBRC 100440) (Methanococcus jannaschii)).